Here is a 334-residue protein sequence, read N- to C-terminus: Adenosine deaminase (334 aa).

Residues H16 and H18 each coordinate Zn(2+). Residues H18, D20, and G173 each contribute to the substrate site. H200 serves as a coordination point for Zn(2+). E203 (proton donor) is an active-site residue. Zn(2+) is bound at residue D281.

Belongs to the metallo-dependent hydrolases superfamily. Adenosine and AMP deaminases family. Adenosine deaminase subfamily. The cofactor is Zn(2+).

The catalysed reaction is adenosine + H2O + H(+) = inosine + NH4(+). It catalyses the reaction 2'-deoxyadenosine + H2O + H(+) = 2'-deoxyinosine + NH4(+). Functionally, catalyzes the hydrolytic deamination of adenosine and 2-deoxyadenosine. In Clostridium acetobutylicum (strain ATCC 824 / DSM 792 / JCM 1419 / IAM 19013 / LMG 5710 / NBRC 13948 / NRRL B-527 / VKM B-1787 / 2291 / W), this protein is Adenosine deaminase.